Consider the following 206-residue polypeptide: Nucleoside triphosphate pyrophosphatase (206 aa).

Residue aspartate 71 is the Proton acceptor of the active site.

It belongs to the Maf family. A divalent metal cation serves as cofactor.

It is found in the cytoplasm. It carries out the reaction a ribonucleoside 5'-triphosphate + H2O = a ribonucleoside 5'-phosphate + diphosphate + H(+). The catalysed reaction is a 2'-deoxyribonucleoside 5'-triphosphate + H2O = a 2'-deoxyribonucleoside 5'-phosphate + diphosphate + H(+). Functionally, nucleoside triphosphate pyrophosphatase. May have a dual role in cell division arrest and in preventing the incorporation of modified nucleotides into cellular nucleic acids. The polypeptide is Nucleoside triphosphate pyrophosphatase (Rippkaea orientalis (strain PCC 8801 / RF-1) (Cyanothece sp. (strain PCC 8801))).